The primary structure comprises 221 residues: MPLAKEIPTPYVWSYQPQMGVPAGASQDYSTKINCLSAGPRMAQTVFALRDQRNRVLTAEAHGQTPRPVVNPASWPAAALSHEPPPPTLLTLPRNEPTEHAMTDAGYQIAGGAAPWSGVKTGSFCGRGLQLAEPPTTAIYPSGLFHLGRGQRLVLDHQPARTLLLESAPSVPRYGGIGARQFLKEFTPAVYPQPYSGPPNTFPDYFCFNYDSVSNSVDGYS.

Phosphothreonine; by host is present on T65. Positions 113-150 (AAPWSGVKTGSFCGRGLQLAEPPTTAIYPSGLFHLGRG) are excised as a propeptide.

It belongs to the adenoviridae hexon-linking protein family. In terms of assembly, interacts with the peripentonal hexons as well as the hexons in the facets. Part of a complex composed of the core-capsid bridging protein, the endosome lysis protein VI and the hexon-linking protein VIII; these interactions bridge the virus core to the capsid. Post-translationally, cleaved by the viral protease during virion maturation. May cause the middle segment to be shed from the capsid.

The protein localises to the virion. Its subcellular location is the host nucleus. In terms of biological role, structural component of the virion that acts as a cement protein on the capsid interior and which glue the peripentonal hexons and group-of-nine hexons together. The protein is Pre-hexon-linking protein VIII of Sus scrofa (Pig).